Here is a 295-residue protein sequence, read N- to C-terminus: MATAALFETSITSLPLLHRGKVRDIYAVDENHLLIIQTDRVSAFDVILPTPIPEKGKILTKISRFWFDKLAHIIPNHLTDITPESVVSSREQDQVSDRAFIVRKLKPLPVEAIVRGYISGSGWKDYQRSGTICGIALPAGLREADKIPDGAIFTPSTKAEAGSHDENISYSVCEQLLGVSLAAAVSRHSIALYTAAADYALTRSIIIADTKFEFGLDEANQLYLIDEALTPDSSRFWPAESYRPGKTPPSYDKQFIRDWLEQINWNKTPPAPPIPEEVLVQTIEKYQAACRVLTQ.

Belongs to the SAICAR synthetase family.

It carries out the reaction 5-amino-1-(5-phospho-D-ribosyl)imidazole-4-carboxylate + L-aspartate + ATP = (2S)-2-[5-amino-1-(5-phospho-beta-D-ribosyl)imidazole-4-carboxamido]succinate + ADP + phosphate + 2 H(+). The protein operates within purine metabolism; IMP biosynthesis via de novo pathway; 5-amino-1-(5-phospho-D-ribosyl)imidazole-4-carboxamide from 5-amino-1-(5-phospho-D-ribosyl)imidazole-4-carboxylate: step 1/2. The chain is Phosphoribosylaminoimidazole-succinocarboxamide synthase from Nitrosomonas europaea (strain ATCC 19718 / CIP 103999 / KCTC 2705 / NBRC 14298).